The sequence spans 1372 residues: uncharacterized protein (1372 aa).

The segment at 1 to 67 (MEATDQEVML…PPAPSKNPMQ (67 aa)) is disordered. Residues 17–28 (MSTSATSSTNGG) are compositionally biased toward polar residues. The stretch at 75-143 (NLYQTAQEQL…LEEHDRLRRK (69 aa)) forms a coiled coil. 5 disordered regions span residues 178–199 (NDLS…LSGD), 238–287 (HINR…QASS), 380–414 (EVSN…EVRR), 427–447 (QSLE…VPVP), and 486–531 (EERM…DSGI). Composition is skewed to low complexity over residues 184–198 (GIGT…SLSG) and 238–251 (HINR…HGNG). Polar residues-rich tracts occupy residues 257–287 (TGPS…QASS) and 399–408 (TNGNSATTAP). Positions 409 to 438 (KSEVRRLSGDISSIRDRMQSLEQQRKAFSS) form a coiled coil. Residues 486–499 (EERMRQQQQKEKHS) show a composition bias toward basic and acidic residues. Residues 514 to 523 (ALIIEEPPVA) are compositionally biased toward low complexity. A coiled-coil region spans residues 539–580 (LQQQQQLNAAIAALALEERQLEEAANAVNQIEAEFDELTDLH). Residues 652–673 (VSKSGPTPNPTSTPNMVSSSPN) show a composition bias toward low complexity. Disordered stretches follow at residues 652-679 (VSKS…LRRK), 799-820 (SRQL…RSEH), 860-897 (SQSD…PKRV), 1151-1181 (SSQM…PIPK), and 1231-1250 (SPPS…SPTK). 2 stretches are compositionally biased toward polar residues: residues 860-871 (SQSDSKSLTSPI) and 1151-1160 (SSQMMKTSLP).

This is an uncharacterized protein from Drosophila melanogaster (Fruit fly).